The chain runs to 322 residues: Manganese-dependent ADP-ribose/CDP-alcohol diphosphatase (322 aa).

Zn(2+) contacts are provided by D13, Q15, D60, N96, H228, H265, and H267.

This sequence belongs to the ADPRibase-Mn family. As to quaternary structure, monomer. Mg(2+) is required as a cofactor.

It carries out the reaction CDP-choline + H2O = phosphocholine + CMP + 2 H(+). It catalyses the reaction ADP-D-ribose + H2O = D-ribose 5-phosphate + AMP + 2 H(+). The catalysed reaction is CDP-glycerol + H2O = sn-glycerol 3-phosphate + CMP + 2 H(+). In terms of biological role, hydrolyzes ADP-ribose, IDP-ribose, CDP-glycerol, CDP-choline and CDP-ethanolamine, but not other non-reducing ADP-sugars or CDP-glucose. This Danio rerio (Zebrafish) protein is Manganese-dependent ADP-ribose/CDP-alcohol diphosphatase (adprm).